A 75-amino-acid chain; its full sequence is Defensin-like protein 58 (75 aa).

A signal peptide spans 1 to 23 (MNITKRYVVIFFLVMLTKSLSNS). 4 cysteine pairs are disulfide-bonded: Cys39–Cys73, Cys43–Cys66, Cys52–Cys71, and Cys56–Cys72.

It belongs to the DEFL family.

It is found in the secreted. The sequence is that of Defensin-like protein 58 from Arabidopsis thaliana (Mouse-ear cress).